The following is a 385-amino-acid chain: 6-hydroxynicotinate 3-monooxygenase (385 aa).

Residues 1–20 (MSQSPRIAVVGAGLGGAAAA) form the signal peptide. FAD contacts are provided by residues Gly15, 34–35 (EQ), His47, Arg108, and Leu130. His47 serves as the catalytic Proton acceptor. Tyr215 serves as the catalytic Proton acceptor. FAD is bound by residues Asp294 and 307–308 (AA).

It belongs to the 6-hydroxynicotinate 3-monooxygenase family. Monomer. FAD is required as a cofactor.

It carries out the reaction 6-hydroxynicotinate + NADH + O2 + 2 H(+) = 2,5-dihydroxypyridine + CO2 + NAD(+) + H2O. Inhibited competitively by nicotinic acid with a Ki of 0.49 mM. Inhibited by thiol-specific compounds p-chloromercuribenzoate, DTNB, Ag(2)SO(4), HgCl(2), CuCl(2) and N-ethylmaleimide. No inhibition by o-phenanthroline, 8-hydroxyquinoline, EDTA, disodium 4,5-dihydroxy-m-benzenedisulfonate, fluoride, azide, KCl, LiCl, NaCl, BaCl(2), MnCl(2), MgCl(2), PBCl, ZnCl(2), CoCl(2), SnCl(2), FeSO(4), FeCl(3), NiCl(2), CdCl(2), AlCl(3), iodoacetic acid, hydro-xylamine, phenylhydrazine, semicarbazide, cysteamine, alpha,alpha-dipyridyl and urea. Its function is as follows. Flavin-dependent monooxygenase (FMO) that catalyzes the decarboxylative hydroxylation of 6-hydroxynicotinic acid (6-HNA) to 2,5-dihydroxypyridine (2,5-DHP) with concomitant oxidation of NADH, a step in the aerobic nicotinate degradation pathway. Uses NADH in preference to NADPH as an electron donor. The chain is 6-hydroxynicotinate 3-monooxygenase (nicC) from Pseudomonas fluorescens.